A 137-amino-acid chain; its full sequence is Small ribosomal subunit protein uS12 (137 aa).

Residues 1–57 are disordered; sequence MPTINQLVRKPRQSKSKKSDSPVLNRGFNSKKKQFTNLNSPQKRGVCTRVGTMTPRK. Position 102 is a 3-methylthioaspartic acid (aspartate 102). Positions 118 to 137 are disordered; sequence SGVDGRRQGRSLYGTKKPKN.

This sequence belongs to the universal ribosomal protein uS12 family. As to quaternary structure, part of the 30S ribosomal subunit. Contacts proteins S8 and S17. May interact with IF1 in the 30S initiation complex.

Functionally, with S4 and S5 plays an important role in translational accuracy. Its function is as follows. Interacts with and stabilizes bases of the 16S rRNA that are involved in tRNA selection in the A site and with the mRNA backbone. Located at the interface of the 30S and 50S subunits, it traverses the body of the 30S subunit contacting proteins on the other side and probably holding the rRNA structure together. The combined cluster of proteins S8, S12 and S17 appears to hold together the shoulder and platform of the 30S subunit. This chain is Small ribosomal subunit protein uS12, found in Staphylococcus haemolyticus (strain JCSC1435).